The sequence spans 208 residues: Uracil phosphoribosyltransferase (208 aa).

5-phospho-alpha-D-ribose 1-diphosphate contacts are provided by residues arginine 78, arginine 103, and 130 to 138 (DPMLATGGS). Uracil is bound by residues isoleucine 193 and 198 to 200 (GDA). Aspartate 199 contributes to the 5-phospho-alpha-D-ribose 1-diphosphate binding site.

It belongs to the UPRTase family. Requires Mg(2+) as cofactor.

The enzyme catalyses UMP + diphosphate = 5-phospho-alpha-D-ribose 1-diphosphate + uracil. Its pathway is pyrimidine metabolism; UMP biosynthesis via salvage pathway; UMP from uracil: step 1/1. Its activity is regulated as follows. Allosterically activated by GTP. Its function is as follows. Catalyzes the conversion of uracil and 5-phospho-alpha-D-ribose 1-diphosphate (PRPP) to UMP and diphosphate. The chain is Uracil phosphoribosyltransferase from Blochmanniella pennsylvanica (strain BPEN).